A 716-amino-acid chain; its full sequence is MIYQSPTIQVELLEDNIAKLCFNAPGSVNKFDRETLASLDAALDSIKQQSNIQALVLTSGKDTFIVGADITEFLGLFAQDDAVLLSWVEQANAVFNKLEDLPFPTASAIKGFALGGGCETILATDFRIADTTAKIGLPETKLGIIPGFGGTVRLPRVIGADNALEWITTGNEQRAEDALKVGAVDAVVAPEALEVAAIQMLKDAVAEKLDWQARRQRKLSPLTLPKLEAMMSFTTAKGMVFSVAGKHYPAPMAAVNVVEQAATKGRSDALQIEHQAFIKLAKTDVAKALIGIFLNDQFVKGKAKKAGKLAKAVNSAAVLGAGIMGGGIAYQSASKGTPIVMKDIAQPALDLGLNEAAKLLSAQVARGRSTPEKMAKVLNNITPALEYAPVKHADVVVEAVVEHPKVKAQVLAEVEQYVSEDAIIASNTSTISISLLAKSMKKPERFCGMHFFNPVHKMPLVEVIRGEHSSEETIASVVAYASKMGKTPIVVNDCPGFFVNRVLFPYFAGFNGLLAEGGDFAAIDKVMEKQFGWPMGPAYLLDVVGLDTGHHAQAVMAEGFPDRMGKSGNDAIDVMFENKRLGQKNGKGFYAYSVDSRGKPKKDVDPTSYELLKAAFGEQKAFDADEIIARTMIPMIIETVRCLEEGIVASPAEADMGLVYGLGFPPFRGGVFRYLDTMGVANFVALADKYAHLGGLYQVTDAMRALAANNGSYYQA.

The segment at 1 to 189 (MIYQSPTIQV…KVGAVDAVVA (189 aa)) is enoyl-CoA hydratase/isomerase. Asp296 is a substrate binding site. The segment at 311 to 716 (KAVNSAAVLG…AANNGSYYQA (406 aa)) is 3-hydroxyacyl-CoA dehydrogenase. Residues Met324, Asp343, 400–402 (VVE), Lys407, and Ser429 each bind NAD(+). Residue His450 is the For 3-hydroxyacyl-CoA dehydrogenase activity of the active site. Asn453 contributes to the NAD(+) binding site. 2 residues coordinate substrate: Asn500 and Tyr660.

It in the N-terminal section; belongs to the enoyl-CoA hydratase/isomerase family. In the C-terminal section; belongs to the 3-hydroxyacyl-CoA dehydrogenase family. As to quaternary structure, heterotetramer of two alpha chains (FadB) and two beta chains (FadA).

It carries out the reaction a (3S)-3-hydroxyacyl-CoA + NAD(+) = a 3-oxoacyl-CoA + NADH + H(+). The catalysed reaction is a (3S)-3-hydroxyacyl-CoA = a (2E)-enoyl-CoA + H2O. The enzyme catalyses a 4-saturated-(3S)-3-hydroxyacyl-CoA = a (3E)-enoyl-CoA + H2O. It catalyses the reaction (3S)-3-hydroxybutanoyl-CoA = (3R)-3-hydroxybutanoyl-CoA. It carries out the reaction a (3Z)-enoyl-CoA = a 4-saturated (2E)-enoyl-CoA. The catalysed reaction is a (3E)-enoyl-CoA = a 4-saturated (2E)-enoyl-CoA. It participates in lipid metabolism; fatty acid beta-oxidation. Functionally, involved in the aerobic and anaerobic degradation of long-chain fatty acids via beta-oxidation cycle. Catalyzes the formation of 3-oxoacyl-CoA from enoyl-CoA via L-3-hydroxyacyl-CoA. It can also use D-3-hydroxyacyl-CoA and cis-3-enoyl-CoA as substrate. The polypeptide is Fatty acid oxidation complex subunit alpha (Shewanella oneidensis (strain ATCC 700550 / JCM 31522 / CIP 106686 / LMG 19005 / NCIMB 14063 / MR-1)).